The following is a 499-amino-acid chain: Salviol synthase (499 aa).

A helical membrane pass occupies residues 4–24; the sequence is HIPSLVLCISFFIFFKIVSKL. Position 436 (cysteine 436) interacts with heme.

It belongs to the cytochrome P450 family. It depends on heme as a cofactor. As to expression, expressed in leaf glandular trichomes.

The protein resides in the membrane. It carries out the reaction ferruginol + reduced [NADPH--hemoprotein reductase] + O2 = salviol + oxidized [NADPH--hemoprotein reductase] + H2O + H(+). It functions in the pathway secondary metabolite biosynthesis; terpenoid biosynthesis. Its function is as follows. Monooxygenase involved in the biosynthesis of labdane-related diterpenes natural products. Catalyzes the oxidation of ferruginol to produce salviol. Salviol is an intermediate in the biosynthesis of carnosate, a potent antioxidant. The polypeptide is Salviol synthase (Salvia pomifera (Apple sage)).